The sequence spans 252 residues: uncharacterized protein (252 aa).

The chain crosses the membrane as a helical span at residues 80-100; sequence LSVLVIGSTMFTHAGVLPVLA.

The protein localises to the host membrane. It is found in the virion. This is an uncharacterized protein from Acanthamoeba polyphaga mimivirus (APMV).